The sequence spans 523 residues: MQRAAALVRRGCGPRTPSSWGRSQSSAAAEASAVLKVRPERSRRERILTLESMNPQVKAVEYAVRGPIVLKAGEIELELQRGIKKPFTEVIRANIGDAQAMGQQPITFLRQVMALCTYPNLLDSPSFPEDAKKRARRILQACGGNSLGSYSASQGVNCIREDVAAYITRRDGGVPADPDNIYLTTGASDGISTILKILVSGGGKSRTGVMIPIPQYPLYSAVISELDAIQVNYYLDEENCWALNVNELRRAVQEAKDHCDPKVLCIINPGNPTGQVQSRKCIEDVIHFAWEEKLFLLADEVYQDNVYSPDCRFHSFKKVLYEMGPEYSSNVELASFHSTSKGYMGECGYRGGYMEVINLHPEIKGQLVKLLSVRLCPPVSGQAAMDIVVNPPVAGEESFEQFSREKESVLGNLAKKAKLTEDLFNQVPGIHCNPLQGAMYAFPRIFIPAKAVEAAQAHQMAPDMFYCMKLLEETGICVVPGSGFGQREGTYHFRMTILPPVEKLKTVLQKVKDFHINFLEKYA.

The interval 1–25 is disordered; it reads MQRAAALVRRGCGPRTPSSWGRSQS. Residues Ala187, Ser188, Tyr216, Asn271, and Ser338 each contribute to the pyridoxal 5'-phosphate site. Lys341 carries the post-translational modification N6-(pyridoxal phosphate)lysine. Arg350 provides a ligand contact to pyridoxal 5'-phosphate. N6-acetyllysine is present on residues Lys415, Lys505, and Lys512.

It belongs to the class-I pyridoxal-phosphate-dependent aminotransferase family. Alanine aminotransferase subfamily. Homodimer. It depends on pyridoxal 5'-phosphate as a cofactor. As to expression, expressed at high levels in muscle, adipose tissue, kidney and brain and at lower levels in the liver and breast.

The catalysed reaction is L-alanine + 2-oxoglutarate = pyruvate + L-glutamate. It functions in the pathway amino-acid degradation; L-alanine degradation via transaminase pathway; pyruvate from L-alanine: step 1/1. In terms of biological role, catalyzes the reversible transamination between alanine and 2-oxoglutarate to form pyruvate and glutamate. The chain is Alanine aminotransferase 2 (GPT2) from Homo sapiens (Human).